The following is a 345-amino-acid chain: Heat stress transcription factor A-2 (345 aa).

A compositionally biased stretch (low complexity) spans glycine 17–serine 30. Residues glycine 17 to threonine 40 form a disordered region. Residues proline 42–asparagine 136 mediate DNA binding. The hydrophobic repeat HR-A/B stretch occupies residues serine 150 to leucine 216. Residues glutamate 231–leucine 238 carry the Nuclear localization signal motif. Positions glutamate 273–aspartate 282 match the AHA1 motif. Residue lysine 315 forms a Glycyl lysine isopeptide (Lys-Gly) (interchain with G-Cter in SUMO) linkage. The AHA2 signature appears at leucine 324–aspartate 333. Residues methionine 334–leucine 341 carry the Nuclear export signal motif.

It belongs to the HSF family. Class A subfamily. In terms of assembly, homotrimer. Interacts with SUMO1. Binds to HSBP. In terms of processing, exhibits temperature-dependent phosphorylation. Post-translationally, sumoylated at Lys-315. Sumoylation represses its function.

The protein localises to the cytoplasm. Its subcellular location is the nucleus. Its function is as follows. Transcriptional activator that specifically binds DNA sequence 5'-AGAAnnTTCT-3' known as heat shock promoter elements (HSE). Seems to be involved in other environmental stress responses. Activates ascorbate peroxidase 2 (APX2) in addition to several heat shock protein (HSPs). Binds to the promoter of SGIP1 and activates its expression in heat acclimated plants. Involved in the mechanisms necessary for quick response to heat and subsequent heritable transgenerational memory of heat acclimation (global warming) such as early flowering and attenuated immunity; this process includes epigenetic regulation as well as post-transcriptional gene silencing (PTGS). In response to heat, HSFA2 is activated and promotes the expression of REF6 which in turn derepresses HSFA2, thus establishing an inheritable feedback loop able to trigger SGIP1 and subsequent SGIP1-mediated SGS3 degradation; this prevents the biosynthesis of trans-acting siRNA (tasiRNA) and leads to the release of HTT5, which drives early flowering but attenuates immunity. This Arabidopsis thaliana (Mouse-ear cress) protein is Heat stress transcription factor A-2.